A 1235-amino-acid polypeptide reads, in one-letter code: Phosphorylase b kinase regulatory subunit alpha, liver isoform (1235 aa).

Positions 636–655 are disordered; sequence FSPDSEPDLGGYLEDSSPQE. Residues Ser-695, Ser-729, and Ser-735 each carry the phosphoserine modification. The calmodulin-binding stretch occupies residues 807 to 837; it reads LSELYGKAGLNQEWSLIRYISGLLRKKVEVL. Phosphoserine occurs at positions 983, 1015, and 1044. A disordered region spans residues 1033–1060; the sequence is SIKSVRSSTPSSPTGTSSTDSGGQHLGW. Positions 1039–1055 are enriched in low complexity; the sequence is SSTPSSPTGTSSTDSGG. The calmodulin-binding stretch occupies residues 1059 to 1099; the sequence is GWGEQQGQWLRRRRLDGAINRVPVGFYQKVWKILQKCHGLS. A lipid anchor (S-farnesyl cysteine) is attached at Cys-1232.

Belongs to the phosphorylase b kinase regulatory chain family. As to quaternary structure, hexadecamer of 4 heterotetramers, each composed of alpha, beta, gamma, and delta subunits. Alpha (PHKA1 or PHKA2) and beta (PHKB) are regulatory subunits, gamma (PHKG1 or PHKG2) is the catalytic subunit, and delta is calmodulin. Although the final Cys may be farnesylated, the terminal tripeptide is probably not removed, and the C-terminus is not methylated.

The protein resides in the cell membrane. Its pathway is glycan biosynthesis; glycogen metabolism. By phosphorylation of various serine residues and by calcium. In terms of biological role, phosphorylase b kinase catalyzes the phosphorylation of serine in certain substrates, including troponin I. The alpha chain may bind calmodulin. This chain is Phosphorylase b kinase regulatory subunit alpha, liver isoform (Phka2), found in Mus musculus (Mouse).